The chain runs to 532 residues: Arginine--tRNA ligase (532 aa).

The 'HIGH' region signature appears at 122–132; that stretch reads ANPTGPLHVAS.

This sequence belongs to the class-I aminoacyl-tRNA synthetase family. Monomer.

It localises to the cytoplasm. It carries out the reaction tRNA(Arg) + L-arginine + ATP = L-arginyl-tRNA(Arg) + AMP + diphosphate. This chain is Arginine--tRNA ligase, found in Elusimicrobium minutum (strain Pei191).